Reading from the N-terminus, the 394-residue chain is Protein TsgA homolog (394 aa).

12 helical membrane-spanning segments follow: residues 11-31 (WISY…GIVM), 51-71 (FLNA…EIIP), 76-96 (LVFG…GHNL), 101-121 (ISMF…TFLV), 134-154 (LLFT…AAAM), 162-182 (WYWV…LTLC), 206-226 (VGVL…LGFI), 246-266 (QLVS…SFIL), 274-294 (IVTV…STDN), 302-322 (ILAL…LGSL), 334-354 (FILT…GPIV), and 363-383 (LETA…LGFF).

Belongs to the major facilitator superfamily. TsgA family.

The protein resides in the cell inner membrane. The chain is Protein TsgA homolog from Yersinia pestis bv. Antiqua (strain Antiqua).